Reading from the N-terminus, the 515-residue chain is N-fatty-acyl-amino acid synthase/hydrolase PM20D1.1 (515 aa).

The signal sequence occupies residues 1-34 (MKTKFTKKTVLKFFGILFAILLLSVLILFSVVIG). N-linked (GlcNAc...) asparagine glycosylation is found at Asn50, Asn87, and Asn118. His140 serves as a coordination point for Zn(2+). Asp142 is a catalytic residue. Asp173 is a binding site for Zn(2+). The active-site Proton acceptor is the Glu207. The Zn(2+) site is built by Glu208, Asp234, and His480.

It belongs to the peptidase M20A family. Zn(2+) serves as cofactor.

The protein resides in the secreted. The enzyme catalyses an N-acyl-L-amino acid + H2O = an L-alpha-amino acid + a carboxylate. The catalysed reaction is an N-acyl-aromatic L-alpha-amino acid + H2O = an aromatic L-alpha-amino acid + a carboxylate. It catalyses the reaction N-(5Z,8Z,11Z,14Z)-eicosatetraenoyl-glycine + H2O = (5Z,8Z,11Z,14Z)-eicosatetraenoate + glycine. It carries out the reaction N-hexadecanoyl-L-phenylalanine + H2O = hexadecanoate + L-phenylalanine. The enzyme catalyses N-octadecanoyl-L-phenylalanine + H2O = octadecanoate + L-phenylalanine. The catalysed reaction is N-(4Z,7Z,10Z,13Z,16Z,19Z-docosahexaenoyl)-L-phenylalanine + H2O = (4Z,7Z,10Z,13Z,16Z,19Z)-docosahexaenoate + L-phenylalanine. It catalyses the reaction N-(9Z-octadecenoyl)-L-asparagine + H2O = L-asparagine + (9Z)-octadecenoate. It carries out the reaction (9Z)-octadecenoate + glycine = N-(9Z-octadecenoyl)glycine + H2O. The enzyme catalyses N-(9Z-octadecenoyl)-L-lysine + H2O = L-lysine + (9Z)-octadecenoate. The catalysed reaction is N-(9Z-octadecenoyl)-L-methionine + H2O = (9Z)-octadecenoate + L-methionine. It catalyses the reaction N-(9Z-octadecenoyl)-L-serine + H2O = L-serine + (9Z)-octadecenoate. It carries out the reaction N-(9Z-octadecenoyl)-L-tryptophan + H2O = L-tryptophan + (9Z)-octadecenoate. The enzyme catalyses N-(9Z-octadecenoyl)-L-tyrosine + H2O = L-tyrosine + (9Z)-octadecenoate. The catalysed reaction is N-(9Z-octadecenoyl)-L-glutamine + H2O = L-glutamine + (9Z)-octadecenoate. It catalyses the reaction N-(5Z,8Z,11Z,14Z-eicosatetraenoyl)-L-serine + H2O = (5Z,8Z,11Z,14Z)-eicosatetraenoate + L-serine. It carries out the reaction (5Z,8Z,11Z,14Z)-eicosatetraenoate + L-phenylalanine = N-(5Z,8Z,11Z,14Z-eicosatetraenoyl)-L-phenylalanine + H2O. The enzyme catalyses N-(9Z-octadecenoyl)-L-leucine + H2O = L-leucine + (9Z)-octadecenoate. The catalysed reaction is L-phenylalanine + (9Z)-octadecenoate = N-(9Z-octadecenoyl)-L-phenylalanine + H2O. Its pathway is amino-acid metabolism. It functions in the pathway energy metabolism; electron transfer. The protein operates within lipid metabolism; fatty acid metabolism. With respect to regulation, lipoproteins are powerful coactivators of PM20D1 activity in vitro and NAA biosynthesis in vivo. Functionally, secreted enzyme that regulates the endogenous N-fatty acyl amino acid (NAAs) tissue and circulating levels by functioning as a bidirectional NAA synthase/hydrolase. It condenses free fatty acids and free amino acids to generate NAAs and bidirectionally catalyzes the reverse hydrolysis reaction. Some of these NAAs stimulate oxidative metabolism via mitochondrial uncoupling, increasing energy expenditure in a UPC1-independent manner. Thereby, this secreted protein may indirectly regulate whole body energy expenditure. PM20D1 circulates in tight association with both low- and high-density (LDL and HDL,respectively) lipoprotein particles. This is N-fatty-acyl-amino acid synthase/hydrolase PM20D1.1 from Danio rerio (Zebrafish).